We begin with the raw amino-acid sequence, 483 residues long: Aspartyl/glutamyl-tRNA(Asn/Gln) amidotransferase subunit B (483 aa).

It belongs to the GatB/GatE family. GatB subfamily. Heterotrimer of A, B and C subunits.

The enzyme catalyses L-glutamyl-tRNA(Gln) + L-glutamine + ATP + H2O = L-glutaminyl-tRNA(Gln) + L-glutamate + ADP + phosphate + H(+). The catalysed reaction is L-aspartyl-tRNA(Asn) + L-glutamine + ATP + H2O = L-asparaginyl-tRNA(Asn) + L-glutamate + ADP + phosphate + 2 H(+). Allows the formation of correctly charged Asn-tRNA(Asn) or Gln-tRNA(Gln) through the transamidation of misacylated Asp-tRNA(Asn) or Glu-tRNA(Gln) in organisms which lack either or both of asparaginyl-tRNA or glutaminyl-tRNA synthetases. The reaction takes place in the presence of glutamine and ATP through an activated phospho-Asp-tRNA(Asn) or phospho-Glu-tRNA(Gln). The sequence is that of Aspartyl/glutamyl-tRNA(Asn/Gln) amidotransferase subunit B from Marinobacter nauticus (strain ATCC 700491 / DSM 11845 / VT8) (Marinobacter aquaeolei).